The primary structure comprises 345 residues: S-adenosylmethionine:tRNA ribosyltransferase-isomerase (345 aa).

Belongs to the QueA family. In terms of assembly, monomer.

It localises to the cytoplasm. It catalyses the reaction 7-aminomethyl-7-carbaguanosine(34) in tRNA + S-adenosyl-L-methionine = epoxyqueuosine(34) in tRNA + adenine + L-methionine + 2 H(+). Its pathway is tRNA modification; tRNA-queuosine biosynthesis. Its function is as follows. Transfers and isomerizes the ribose moiety from AdoMet to the 7-aminomethyl group of 7-deazaguanine (preQ1-tRNA) to give epoxyqueuosine (oQ-tRNA). This Rhodospirillum rubrum (strain ATCC 11170 / ATH 1.1.1 / DSM 467 / LMG 4362 / NCIMB 8255 / S1) protein is S-adenosylmethionine:tRNA ribosyltransferase-isomerase.